The sequence spans 398 residues: Acetate kinase (398 aa).

A Mg(2+)-binding site is contributed by asparagine 8. Lysine 15 lines the ATP pocket. Position 89 (arginine 89) interacts with substrate. The active-site Proton donor/acceptor is the aspartate 146. ATP contacts are provided by residues 206 to 210, 283 to 285, and 331 to 335; these read HIGNG, DMR, and GMGEN. Glutamate 383 provides a ligand contact to Mg(2+).

Belongs to the acetokinase family. In terms of assembly, homodimer. It depends on Mg(2+) as a cofactor. The cofactor is Mn(2+).

It is found in the cytoplasm. It carries out the reaction acetate + ATP = acetyl phosphate + ADP. Its pathway is metabolic intermediate biosynthesis; acetyl-CoA biosynthesis; acetyl-CoA from acetate: step 1/2. Its function is as follows. Catalyzes the formation of acetyl phosphate from acetate and ATP. Can also catalyze the reverse reaction. This is Acetate kinase from Streptococcus pyogenes serotype M6 (strain ATCC BAA-946 / MGAS10394).